The primary structure comprises 205 residues: Molybdenum cofactor guanylyltransferase (205 aa).

Residues 14-16 (LAG), K27, D77, and D107 contribute to the GTP site. Mg(2+) is bound at residue D107.

It belongs to the MobA family. Monomer. Mg(2+) serves as cofactor.

It localises to the cytoplasm. The catalysed reaction is Mo-molybdopterin + GTP + H(+) = Mo-molybdopterin guanine dinucleotide + diphosphate. Its function is as follows. Transfers a GMP moiety from GTP to Mo-molybdopterin (Mo-MPT) cofactor (Moco or molybdenum cofactor) to form Mo-molybdopterin guanine dinucleotide (Mo-MGD) cofactor. This Burkholderia orbicola (strain MC0-3) protein is Molybdenum cofactor guanylyltransferase.